Consider the following 930-residue polypeptide: MISVDRLSEEQALGMKEQEWAGPEALCPGWQEEEVSDGEGPEDSGHPDPTAHAYEVLQHTLRLEGMPLTIDRTGQPRTGSGPLDMTVCVLGSPTAFLPVLLEGGTRYPGAMVLCLAPAWASRVPSETSPGSWSLLLSRGVSFEAGGCTALEEFVPPRRATYVTGTFGSEGSWEGELARDLDCPTGGSALLTRWLEDPLLSRWLLSARAGLPVPPTLAFITGLWETLPEEPEPPGVHLVRLQDPQGQESLVRDEVGAFLEGSSMQPYDQVAVRLSGWRWRGTDPHSTHRKVEGEAVAQAVAALLKGLREEESILLEALVPTARLPTLPPRSAAPRLPMALRICTVVCRSWGDRPQLCQVACTAGRAEVPVRHGSALPLGLDSSLRQWGLADAAQRQALAGQLREAAEAAMAALLAAEGELSPAQRGGARAHTDVLGVDFLLACVDGTLELVALSANCLRCLETCLLAEGMGHDVGQPAGDVPRLLAECLLHRAQCHLVEGKDILLIGAGGVSKSFVWEAAREYGLRIHLVESDPEHFAAGLVETFLPYDSREHRRDEEHAERVLEMLRARGLRPDACLSYWDDCVVLTALLCQRLGLPGCPPAAVRLAKQKSRTHQHLQRCRRGRPPPAAFSVPCRRLRSHGDVERAAGAVPFPAVAKLEFGAGAVGVRLVENAGQCHAHAAQLWHDLRADADHPGIGLGWGNAMLLMEYVPGTEHDVDLVLFEGRLLGAWVSDNGPTRVPTFLETAATLPSCLPADRQAQLVRAALRCCRACGLRHGVFNVELKLSPAGPRLLEINPRMGGFYLRDWMRAVYGPDLLLAAVLLALGLPPVLPSRPAPRQQLAGVMCLASEHGRALRGGVMAALQGLQRRGLVRLNPLFEEAGGRYEEPCLSVACAGDGPAEACGRLLGLCQALGIDSPQYPVGHFLSHFK.

Residues 1-24 are disordered; the sequence is MISVDRLSEEQALGMKEQEWAGPE. Residues 624–825 enclose the ATP-grasp domain; the sequence is RPPPAAFSVP…LLLAAVLLAL (202 aa). An ATP-binding site is contributed by 650 to 716; it reads VPFPAVAKLE…MEYVPGTEHD (67 aa). Mg(2+)-binding residues include Glu782, Glu794, and Asn796. 3 residues coordinate Mn(2+): Glu782, Glu794, and Asn796.

In terms of assembly, homotetramer. The cofactor is Mg(2+). Mn(2+) serves as cofactor.

The catalysed reaction is beta-alanine + L-histidine + ATP = carnosine + ADP + phosphate + H(+). The enzyme catalyses 4-aminobutanoate + L-histidine + ATP = L-homocarnosine + ADP + phosphate + H(+). Catalyzes the synthesis of carnosine and homocarnosine. Carnosine is synthesized more efficiently than homocarnosine. In Gallus gallus (Chicken), this protein is Carnosine synthase 1.